The primary structure comprises 323 residues: 4-diphosphocytidyl-2-C-methyl-D-erythritol kinase (323 aa).

The active site involves K25. 110–120 (PVAGGMAGGSA) lines the ATP pocket. Residue D152 is part of the active site.

This sequence belongs to the GHMP kinase family. IspE subfamily.

It catalyses the reaction 4-CDP-2-C-methyl-D-erythritol + ATP = 4-CDP-2-C-methyl-D-erythritol 2-phosphate + ADP + H(+). The protein operates within isoprenoid biosynthesis; isopentenyl diphosphate biosynthesis via DXP pathway; isopentenyl diphosphate from 1-deoxy-D-xylulose 5-phosphate: step 3/6. Its function is as follows. Catalyzes the phosphorylation of the position 2 hydroxy group of 4-diphosphocytidyl-2C-methyl-D-erythritol. The polypeptide is 4-diphosphocytidyl-2-C-methyl-D-erythritol kinase (Mycobacterium leprae (strain Br4923)).